We begin with the raw amino-acid sequence, 569 residues long: MSADCSVGANPLAQLNKRVQQDRTLQHGSHVNIHQGAEAQAFKSGPQVSESNKFQMEQFMAGKASSGGNMFMGAGMSSGPLALGGSSGLRMSPGPAKELGARLGGAPMTGSWSQEFNQQVGSPVQSSSAVSSVSMSSASSSVARAGAYRPMNMMRPVMGLQGARAVGVERHAGPAINDAAWEQQFQELEKQVEKTLNISDPVEQQQVLEELSAEAREADYAGGDYEKRFQQIWNDIHDQTDDLDSRTELGGGSGDYQRVFSTRPAQTAQYAFETDNQYLHNTDAYKIGCILMENGAKLSEAALAFEAAVQQDPGHVDAWLRLGLVQTQNEKELSGINALEQCLKADPHNLMALMTVAISYINEGYDVSAFTMLGRWLETKYPAFVEEPLDRVDRYNLSRLIIEQYLRVANALPEVDPDVQLGLGILFYANEDFDKTIDCFRAALAVRPDDECMWNRLGASLANSNRSEEAIQAYHRAIQLKPTFVRARYNLAVSSMNIGCYREAAEHLLTALSMHEVEGVAMAPGSGNVPSSNILETLKRAFIAMDRRDLLERVVPNMDLQQFRGEFNF.

Cys-5 participates in a covalent cross-link: Glycyl cysteine thioester (Cys-Gly) (interchain with G-Cter in ubiquitin). An amphipathic helix 1 (AH1) region spans residues 6–28 (SVGANPLAQLNKRVQQDRTLQHG). Residue Lys-17 forms a Glycyl lysine isopeptide (Lys-Gly) (interchain with G-Cter in ubiquitin) linkage. The segment at 53 to 71 (KFQMEQFMAGKASSGGNMF) is amphipathic helix 2 (AH2). Residues 112–116 (WSQEF) carry the WxxxF/Y motif 1 motif. Residues 150–154 (PMNMM) form an amphipathic helix 3 (AH3) region. The WxxxF/Y motif 2 motif lies at 181–185 (WEQQF). The tract at residues 229-245 (FQQIWNDIHDQTDDLDS) is amphipathic helix 4 (AH4). 5 TPR repeats span residues 281-315 (NTDAYKIGCILMENGAKLSEAALAFEAAVQQDPGH), 316-349 (VDAWLRLGLVQTQNEKELSGINALEQCLKADPHN), 417-450 (PDVQLGLGILFYANEDFDKTIDCFRAALAVRPDD), 452-484 (CMWNRLGASLANSNRSEEAIQAYHRAIQLKPTF), and 486-518 (RARYNLAVSSMNIGCYREAAEHLLTALSMHEVE).

This sequence belongs to the peroxisomal targeting signal receptor family. In terms of assembly, interacts (via WxxxF/Y and LVxEF motifs) with PEX14; promoting translocation through the PEX13-PEX14 docking complex. Monoubiquitinated at Cys-5 by PEX2 during PEX5 passage through the retrotranslocation channel: monoubiquitination acts as a signal for PEX5 extraction and is required for proper export from peroxisomes and recycling. When PEX5 recycling is compromised, polyubiquitinated at Lys-17 by PEX10 during its passage through the retrotranslocation channel, leading to its degradation.

It localises to the cytoplasm. It is found in the cytosol. Its subcellular location is the peroxisome matrix. In terms of biological role, receptor that mediates peroxisomal import of proteins containing a C-terminal PTS1-type tripeptide peroxisomal targeting signal (SKL-type). Binds to cargo proteins containing a PTS1 peroxisomal targeting signal in the cytosol, and translocates them into the peroxisome matrix by passing through the PEX13-PEX14 docking complex along with cargo proteins. PEX5 receptor is then retrotranslocated into the cytosol, leading to release of bound cargo in the peroxisome matrix, and reset for a subsequent peroxisome import cycle. The protein is Peroxisomal targeting signal receptor (PEX5) of Eremothecium gossypii (strain ATCC 10895 / CBS 109.51 / FGSC 9923 / NRRL Y-1056) (Yeast).